The following is a 1995-amino-acid chain: uncharacterized protein (1995 aa).

The next 7 helical transmembrane spans lie at 31 to 51, 53 to 73, 106 to 126, 157 to 177, 212 to 232, 254 to 274, and 307 to 327; these read NYTE…EFFK, FFSF…PDIA, LVIF…ILPT, FLWL…WLSL, IFLL…PFIS, FLLI…SLLQ, and ILNF…IPYY. Disordered stretches follow at residues 1418-1441 and 1848-1883; these read SLKK…HQFS and DLRW…KTNP. Composition is skewed to basic residues over residues 1422–1441 and 1853–1863; these read SQIK…HQFS and PSSRTKQKRKD.

It belongs to the ycf78 family.

It is found in the plastid. Its subcellular location is the chloroplast membrane. Essential for cell growth. May be involved in binding chloroplast DNA to either the chloroplast envelope or the thylakoid membrane. This is an uncharacterized protein from Chlamydomonas reinhardtii (Chlamydomonas smithii).